A 394-amino-acid polypeptide reads, in one-letter code: Phosphoglycerate kinase (394 aa).

Substrate is bound by residues 21-23, Arg-36, 59-62, Arg-118, and Arg-151; these read DFN and HLGR. A Phosphoserine modification is found at Ser-183. ATP is bound by residues Lys-201 and Gly-292. Residue Thr-299 is modified to Phosphothreonine. Residues Glu-323 and 350-353 contribute to the ATP site; that span reads GGDS.

This sequence belongs to the phosphoglycerate kinase family. In terms of assembly, monomer.

It is found in the cytoplasm. The enzyme catalyses (2R)-3-phosphoglycerate + ATP = (2R)-3-phospho-glyceroyl phosphate + ADP. The protein operates within carbohydrate degradation; glycolysis; pyruvate from D-glyceraldehyde 3-phosphate: step 2/5. In Bacillus cereus (strain ATCC 10987 / NRS 248), this protein is Phosphoglycerate kinase.